The sequence spans 589 residues: V-type ATP synthase alpha chain (589 aa).

232–239 (GPFGSGKT) provides a ligand contact to ATP.

It belongs to the ATPase alpha/beta chains family.

It catalyses the reaction ATP + H2O + 4 H(+)(in) = ADP + phosphate + 5 H(+)(out). Produces ATP from ADP in the presence of a proton gradient across the membrane. The V-type alpha chain is a catalytic subunit. The sequence is that of V-type ATP synthase alpha chain from Acetivibrio thermocellus (strain ATCC 27405 / DSM 1237 / JCM 9322 / NBRC 103400 / NCIMB 10682 / NRRL B-4536 / VPI 7372) (Clostridium thermocellum).